Consider the following 400-residue polypeptide: Tryptophan synthase beta chain (400 aa).

N6-(pyridoxal phosphate)lysine is present on lysine 91.

This sequence belongs to the TrpB family. In terms of assembly, tetramer of two alpha and two beta chains. It depends on pyridoxal 5'-phosphate as a cofactor.

It catalyses the reaction (1S,2R)-1-C-(indol-3-yl)glycerol 3-phosphate + L-serine = D-glyceraldehyde 3-phosphate + L-tryptophan + H2O. Its pathway is amino-acid biosynthesis; L-tryptophan biosynthesis; L-tryptophan from chorismate: step 5/5. Its function is as follows. The beta subunit is responsible for the synthesis of L-tryptophan from indole and L-serine. In Listeria monocytogenes serotype 4b (strain CLIP80459), this protein is Tryptophan synthase beta chain.